Reading from the N-terminus, the 111-residue chain is Large ribosomal subunit protein uL24 (111 aa).

The segment at 43–62 (TRHKKKDQTTKRAAKQSTGK) is disordered.

It belongs to the universal ribosomal protein uL24 family. In terms of assembly, part of the 50S ribosomal subunit.

Functionally, one of two assembly initiator proteins, it binds directly to the 5'-end of the 23S rRNA, where it nucleates assembly of the 50S subunit. In terms of biological role, one of the proteins that surrounds the polypeptide exit tunnel on the outside of the subunit. This chain is Large ribosomal subunit protein uL24, found in Mycoplasma pneumoniae (strain ATCC 29342 / M129 / Subtype 1) (Mycoplasmoides pneumoniae).